The following is a 547-amino-acid chain: Chaperonin GroEL (547 aa).

Residues 30-33 (TLGP), Lys-51, 87-91 (DGTTT), Gly-415, and Asp-496 each bind ATP. Residues 527–547 (SDKEEPMPMRGGMGGMGGMDF) are disordered. Positions 537 to 547 (GGMGGMGGMDF) are enriched in gly residues.

The protein belongs to the chaperonin (HSP60) family. Forms a cylinder of 14 subunits composed of two heptameric rings stacked back-to-back. Interacts with the co-chaperonin GroES.

Its subcellular location is the cytoplasm. The enzyme catalyses ATP + H2O + a folded polypeptide = ADP + phosphate + an unfolded polypeptide.. Its function is as follows. Together with its co-chaperonin GroES, plays an essential role in assisting protein folding. The GroEL-GroES system forms a nano-cage that allows encapsulation of the non-native substrate proteins and provides a physical environment optimized to promote and accelerate protein folding. The chain is Chaperonin GroEL from Rickettsia massiliae (strain Mtu5).